The following is a 367-amino-acid chain: 3-dehydroquinate synthase (367 aa).

NAD(+)-binding positions include 99 to 103, 123 to 124, Lys136, Lys145, and 163 to 166; these read GVVGD, TT, and FLRT. Zn(2+)-binding residues include Glu178, His242, and His259.

It belongs to the sugar phosphate cyclases superfamily. Dehydroquinate synthase family. Requires Co(2+) as cofactor. The cofactor is Zn(2+). It depends on NAD(+) as a cofactor.

It is found in the cytoplasm. The catalysed reaction is 7-phospho-2-dehydro-3-deoxy-D-arabino-heptonate = 3-dehydroquinate + phosphate. It functions in the pathway metabolic intermediate biosynthesis; chorismate biosynthesis; chorismate from D-erythrose 4-phosphate and phosphoenolpyruvate: step 2/7. Catalyzes the conversion of 3-deoxy-D-arabino-heptulosonate 7-phosphate (DAHP) to dehydroquinate (DHQ). This chain is 3-dehydroquinate synthase, found in Chlorobaculum parvum (strain DSM 263 / NCIMB 8327) (Chlorobium vibrioforme subsp. thiosulfatophilum).